The following is a 108-amino-acid chain: Evasin P1229 (108 aa).

An N-terminal signal peptide occupies residues 1–31 (MEVRTFAFLQIVVFVALGIQLFAAVTDAADA). Cystine bridges form between C41–C63, C45–C65, and C56–C76. N44 carries an N-linked (GlcNAc...) asparagine glycan. The tract at residues 88–108 (GDPNNSDLDAATPRHPDASSR) is disordered. Residue N91 is glycosylated (N-linked (GlcNAc...) asparagine). The segment covering 99 to 108 (TPRHPDASSR) has biased composition (basic and acidic residues).

It localises to the secreted. In terms of biological role, salivary chemokine-binding protein which binds to host chemokines CXCL1 and CXCL8. This Ixodes ricinus (Common tick) protein is Evasin P1229.